Here is a 267-residue protein sequence, read N- to C-terminus: Tryptophan synthase alpha chain (267 aa).

Catalysis depends on proton acceptor residues Glu-47 and Asp-58.

It belongs to the TrpA family. Tetramer of two alpha and two beta chains.

It carries out the reaction (1S,2R)-1-C-(indol-3-yl)glycerol 3-phosphate + L-serine = D-glyceraldehyde 3-phosphate + L-tryptophan + H2O. Its pathway is amino-acid biosynthesis; L-tryptophan biosynthesis; L-tryptophan from chorismate: step 5/5. Its function is as follows. The alpha subunit is responsible for the aldol cleavage of indoleglycerol phosphate to indole and glyceraldehyde 3-phosphate. This is Tryptophan synthase alpha chain from Chlorobium chlorochromatii (strain CaD3).